Reading from the N-terminus, the 405-residue chain is Argininosuccinate synthase (405 aa).

ATP contacts are provided by residues Ala10–Ser18 and Ala37. L-citrulline is bound by residues Tyr88 and Ser93. Gly118 is an ATP binding site. L-aspartate is bound by residues Thr120, Asn124, and Asp125. An L-citrulline-binding site is contributed by Asn124. L-citrulline-binding residues include Arg128, Ser179, Ser188, Glu264, and Tyr276.

The protein belongs to the argininosuccinate synthase family. Type 1 subfamily. In terms of assembly, homotetramer.

The protein resides in the cytoplasm. The enzyme catalyses L-citrulline + L-aspartate + ATP = 2-(N(omega)-L-arginino)succinate + AMP + diphosphate + H(+). Its pathway is amino-acid biosynthesis; L-arginine biosynthesis; L-arginine from L-ornithine and carbamoyl phosphate: step 2/3. The protein is Argininosuccinate synthase of Pseudomonas entomophila (strain L48).